Consider the following 527-residue polypeptide: MNNDFNSWDKYCDYLWYDQKINIWLDISKINFSYDQISSLENKFIGVFSSIKELEAGAISNIDEKRQVGHYWLRNPSIAPNTFIKDEIIKDIRDISEFGDKVLKGIIKNNKNQTYTDVLWIGIGGSGLGPLLITEALQENSVGLNFSYIDNIDPFLISEKLDELSDKLPTTLFVVVSKSGGTPEPKIAMNIIKRHVEDKNILWNSNAIAITMKNSQLYKKAKLENWLKIFNLPDWVGGRTSITSSVGLLPLALINQDVSEFIRGASIMDELTRITNIKDNPAALLSSAWFFSGNGIGKRDMVVLPYRDRLQVFSKYLQQLVMESLGKKFNRKGKIVHQGISVFGNKGSTDQHAYVQQLRDGIDNFFCVFIELLDIPDDNKYFGSENPKEFLSGFLQGTRSALSNENRQSITITLDKLNCLTLGALIALFERAVSFYAELVDINAYDQPGVEAGKKAAAEILEYQKKVTELLNNGEEFSIKKITSLIENSTSEPIFFIIRQMCFGNDDYLIKGDWSNPISIIIKKNSK.

The active-site Proton donor is Glu-323. Active-site residues include His-352 and Lys-454.

Belongs to the GPI family.

It localises to the cytoplasm. It carries out the reaction alpha-D-glucose 6-phosphate = beta-D-fructose 6-phosphate. The protein operates within carbohydrate biosynthesis; gluconeogenesis. It participates in carbohydrate degradation; glycolysis; D-glyceraldehyde 3-phosphate and glycerone phosphate from D-glucose: step 2/4. Catalyzes the reversible isomerization of glucose-6-phosphate to fructose-6-phosphate. In Prochlorococcus marinus (strain MIT 9515), this protein is Glucose-6-phosphate isomerase.